A 141-amino-acid polypeptide reads, in one-letter code: Large ribosomal subunit protein uL11c (141 aa).

The protein belongs to the universal ribosomal protein uL11 family. As to quaternary structure, part of the ribosomal stalk of the 50S ribosomal subunit. Interacts with L10 and the large rRNA to form the base of the stalk. L10 forms an elongated spine to which L12 dimers bind in a sequential fashion forming a multimeric L10(L12)X complex.

The protein localises to the plastid. It localises to the chloroplast. Functionally, forms part of the ribosomal stalk which helps the ribosome interact with GTP-bound translation factors. The protein is Large ribosomal subunit protein uL11c of Guillardia theta (Cryptophyte).